The sequence spans 98 residues: Prolactin-releasing peptide (98 aa).

An N-terminal signal peptide occupies residues 1–22 (MKAVGAWLLCLLLLGLALQGAA). Phe53 bears the Phenylalanine amide mark. Positions 58-98 (AAPGDGPRPGPRRELACIPLEGGAEPSRALLGRLTAQLVQE) are excised as a propeptide.

In terms of tissue distribution, more abundantly expressed in the brainstem than the hypothalamus.

The protein localises to the secreted. Stimulates prolactin (PRL) release and regulates the expression of prolactin through its receptor GPR10. May stimulate lactotrophs directly to secrete PRL. The chain is Prolactin-releasing peptide (PRLH) from Ovis aries (Sheep).